A 514-amino-acid polypeptide reads, in one-letter code: Contact site A protein (514 aa).

An N-terminal signal peptide occupies residues 1–19; it reads MKFLLVLIILYNILNSAHS. Residues 20–453 are globular; the sequence is APTITAVSNG…EATTSTTYTI (434 aa). The 84-residue stretch at 21–104 folds into the IPT/TIG 1 domain; that stretch reads PTITAVSNGK…TGGNGLFKYT (84 aa). 5 N-linked (GlcNAc...) asparagine glycosylation sites follow: Asn128, Asn137, Asn207, Asn294, and Asn399. The region spanning 191–283 is the IPT/TIG 2 domain; it reads PTITSITPLA…NQQPITFTYN (93 aa). 2 stretches are compositionally biased toward low complexity: residues 446–475 and 483–494; these read TTST…TATP and STPEETEAPSSA. Residues 446 to 494 are disordered; the sequence is TTSTTYTIPDTPTPTDTATPSPTPTETATPSPTPKPTSTPEETEAPSSA. 2 consecutive repeat copies span residues 462–469 and 472–479. The segment at 462 to 479 is 2 X 8 AA repeats, Pro-rich; the sequence is TATPSPTPTETATPSPTP. Ser492 carries GPI-like-anchor amidated serine lipidation. The propeptide at 493–514 is removed in mature form; that stretch reads SATTLISPLSLIVIFISFVLLI.

Phosphorylated on serine and N-glycosylated with two types of oligosaccharide chains. Post-translationally, the GPI-like-anchor contains a phosphoceramide group, rather than a phosphatidyl group.

It is found in the cell membrane. This cell-surface glycoprotein mediates cell-cell binding via homophilic interaction. The polypeptide is Contact site A protein (csaA) (Dictyostelium discoideum (Social amoeba)).